The primary structure comprises 293 residues: Pyridoxal 5'-phosphate synthase subunit PdxS (293 aa).

D23 contributes to the D-ribose 5-phosphate binding site. K80 acts as the Schiff-base intermediate with D-ribose 5-phosphate in catalysis. D-ribose 5-phosphate is bound at residue G152. R164 is a binding site for D-glyceraldehyde 3-phosphate. D-ribose 5-phosphate-binding positions include G213 and 234–235; that span reads GS.

The protein belongs to the PdxS/SNZ family. As to quaternary structure, in the presence of PdxT, forms a dodecamer of heterodimers.

The enzyme catalyses aldehydo-D-ribose 5-phosphate + D-glyceraldehyde 3-phosphate + L-glutamine = pyridoxal 5'-phosphate + L-glutamate + phosphate + 3 H2O + H(+). It functions in the pathway cofactor biosynthesis; pyridoxal 5'-phosphate biosynthesis. Catalyzes the formation of pyridoxal 5'-phosphate from ribose 5-phosphate (RBP), glyceraldehyde 3-phosphate (G3P) and ammonia. The ammonia is provided by the PdxT subunit. Can also use ribulose 5-phosphate and dihydroxyacetone phosphate as substrates, resulting from enzyme-catalyzed isomerization of RBP and G3P, respectively. This is Pyridoxal 5'-phosphate synthase subunit PdxS from Dehalococcoides mccartyi (strain ATCC BAA-2100 / JCM 16839 / KCTC 5957 / BAV1).